The sequence spans 313 residues: Inner membrane ABC transporter permease protein YdcU (313 aa).

Over 1–25 (MAMNVLQSPSRPGLGKVSGFFWHNP) the chain is Cytoplasmic. The helical transmembrane segment at 26 to 46 (GLGLFLLLLGPLMWFGIVYFG) threads the bilayer. Residues 47–92 (SLLTLLWQGFYTFDDFTMSVTPELTLANIRALFNPANYDIILRTLT) are Periplasmic-facing. The 216-residue stretch at 87-302 (ILRTLTMAVA…PIILIALYLA (216 aa)) folds into the ABC transmembrane type-1 domain. A helical membrane pass occupies residues 93–113 (MAVAVTIASAILAFPMAWYMA). At 114–122 (RYTSGKMKA) the chain is on the cytoplasmic side. A helical membrane pass occupies residues 123 to 143 (FFYIAVMLPMWASYIVKAYAW). Residues 144–154 (TLLLAKDGVAQ) are Periplasmic-facing. Residues 155 to 175 (WFLQHLGLEPLLTAFLTLPAV) traverse the membrane as a helical segment. Over 176–187 (GGNTLSTSGLGR) the chain is Cytoplasmic. Residues 188-208 (FLVFLYIWLPFMILPVQAALE) traverse the membrane as a helical segment. Residues 209–230 (RLPPSLLQASADLGARPRQTFR) are Periplasmic-facing. The helical transmembrane segment at 231–251 (YVVLPLAIPGIAAGSIFTFSL) threads the bilayer. T252 is a topological domain (cytoplasmic). The chain crosses the membrane as a helical span at residues 253–273 (LGDFIVPQLVGPPGYFIGNMV). Residues 274 to 283 (YSQQGAIGNM) are Periplasmic-facing. A helical transmembrane segment spans residues 284 to 304 (PMAAAFTLVPIILIALYLAFV). The Cytoplasmic portion of the chain corresponds to 305 to 313 (KRLGAFDAL).

The protein belongs to the binding-protein-dependent transport system permease family. CysTW subfamily.

It localises to the cell inner membrane. Probably part of the ABC transporter complex YdcSTUV. Probably responsible for the translocation of the substrate across the membrane. The polypeptide is Inner membrane ABC transporter permease protein YdcU (ydcU) (Escherichia coli (strain K12)).